Here is a 337-residue protein sequence, read N- to C-terminus: tRNA dimethylallyltransferase (337 aa).

24-31 (GPTGAGKT) contacts ATP. 26-31 (TGAGKT) contacts substrate. Interaction with substrate tRNA stretches follow at residues 49–52 (DSRQ) and 188–192 (QRAVR).

Belongs to the IPP transferase family. In terms of assembly, monomer. Mg(2+) serves as cofactor.

The catalysed reaction is adenosine(37) in tRNA + dimethylallyl diphosphate = N(6)-dimethylallyladenosine(37) in tRNA + diphosphate. Its function is as follows. Catalyzes the transfer of a dimethylallyl group onto the adenine at position 37 in tRNAs that read codons beginning with uridine, leading to the formation of N6-(dimethylallyl)adenosine (i(6)A). This Nitratidesulfovibrio vulgaris (strain DSM 19637 / Miyazaki F) (Desulfovibrio vulgaris) protein is tRNA dimethylallyltransferase.